Consider the following 365-residue polypeptide: 3-dehydroquinate synthase (365 aa).

NAD(+)-binding positions include 95 to 99 (GVVGD), 119 to 120 (TT), Lys132, and Lys141. Glu174, His238, and His255 together coordinate Zn(2+).

This sequence belongs to the sugar phosphate cyclases superfamily. Dehydroquinate synthase family. Co(2+) serves as cofactor. It depends on Zn(2+) as a cofactor. Requires NAD(+) as cofactor.

The protein resides in the cytoplasm. It catalyses the reaction 7-phospho-2-dehydro-3-deoxy-D-arabino-heptonate = 3-dehydroquinate + phosphate. Its pathway is metabolic intermediate biosynthesis; chorismate biosynthesis; chorismate from D-erythrose 4-phosphate and phosphoenolpyruvate: step 2/7. In terms of biological role, catalyzes the conversion of 3-deoxy-D-arabino-heptulosonate 7-phosphate (DAHP) to dehydroquinate (DHQ). The protein is 3-dehydroquinate synthase of Chlorobium chlorochromatii (strain CaD3).